The primary structure comprises 273 residues: Terpene cyclase ascF (273 aa).

The next 7 helical transmembrane spans lie at 18-38 (VYEA…ILIA), 49-69 (MPLF…LWVV), 78-98 (MTIW…HGVL), 113-133 (ILVG…SWWI), 153-173 (YWAV…MLCV), 178-198 (GGVS…GLNM), and 217-237 (APAV…GFVL).

Belongs to the paxB family.

The protein localises to the membrane. It carries out the reaction ilicicolin A epoxide = ilicicolin C. It functions in the pathway secondary metabolite biosynthesis; terpenoid biosynthesis. Its function is as follows. Terpene cyclase; part of the asc-1 gene cluster that mediates the biosynthesis of both ascochlorin and ascofuranone, a strong inhibitor of cyanide-insensitive alternative oxidases and a promising drug candidate against African trypanosomiasis. The first step in the pathway is performed by the non-reducing polyketide synthase ascC that produces orsellinic acid by condensing acetyl-CoA with 3 malonyl-CoA units. Orsellinic acid is then prenylated by the prenyltransferase ascA to yield ilicicolinic acid B. Ilicicolinic acid B is further reduced to ilicicolin B by the reductase ascB. The halogenase ascD then chlorinates ilicicolin B to produce ilicicolin A which is converted to ilicicolin A epoxide by the cytochrome P450 monooxygenase ascE that catalyzes stereoselective epoxidation of the terminal double bond of the prenyl group. Ilicicolin A epoxide is the last common precursor for the biosynthesis of ascofuranone and ascochlorin. The terpene cyclase ascF produces a monocyclic terpene, and the cyclization reaction is proposed to be initiated by protonation of the terminal epoxide of ilicicolin A epoxide to generate a monocyclic tertiarycation, which is followed by a series of hydride and methyl shifts with abstraction of proton, leading to the formation of the (14S,15R,19R)-trimethylcyclohexanone ring structure of ilicicolin C, which is finally reduced to ascochlorin by the dehydrogenase ascG. On the other hand, ilicicolin A epoxide is hydroxylated by the cytochrome P450 monooxygenase ascH, and the resultant product is cyclized by the terpene cyclase ascI to ascofuranol via protonation-initiated epoxide ring opening, which facilitates the 6-endo-tet cyclization to form the tetrahy-drofuran ring. Finally, ascofuranol is oxidized into ascofuranone by ascJ. This chain is Terpene cyclase ascF, found in Acremonium egyptiacum (Oospora egyptiaca).